The following is a 322-amino-acid chain: Glycerate dehydrogenase (322 aa).

NAD(+) is bound by residues 158–159 (SI), Asp-178, 239–241 (TAR), and Asp-265. The active site involves Arg-241. The active site involves Glu-270. His-288 acts as the Proton donor in catalysis. NAD(+) is bound at residue 288-291 (HIGS).

It belongs to the D-isomer specific 2-hydroxyacid dehydrogenase family. Homodimer.

It catalyses the reaction (R)-glycerate + NAD(+) = 3-hydroxypyruvate + NADH + H(+). It participates in one-carbon metabolism; formaldehyde assimilation via serine pathway. In terms of biological role, active on hydroxypyruvate and glyoxylate. This Hyphomicrobium methylovorum protein is Glycerate dehydrogenase.